Reading from the N-terminus, the 225-residue chain is Cbp/p300-interacting transactivator 2 (225 aa).

The protein belongs to the CITED family.

Its subcellular location is the nucleus. In terms of biological role, transcriptional coactivator or corepressor of the p300/CBP-mediated transcription complex. May be involved in sex determination, early gonad development, left-right patterning during embryogenesis and differentiation of the adrenal cortex. This chain is Cbp/p300-interacting transactivator 2 (cited2), found in Xenopus tropicalis (Western clawed frog).